Consider the following 411-residue polypeptide: Glutamate dehydrogenase (411 aa).

Residue K102 is part of the active site.

It belongs to the Glu/Leu/Phe/Val dehydrogenases family.

It catalyses the reaction L-glutamate + NAD(+) + H2O = 2-oxoglutarate + NH4(+) + NADH + H(+). The catalysed reaction is L-glutamate + NADP(+) + H2O = 2-oxoglutarate + NH4(+) + NADPH + H(+). This chain is Glutamate dehydrogenase (GDH1), found in Zea mays (Maize).